We begin with the raw amino-acid sequence, 817 residues long: Lon protease (817 aa).

Residues 22–216 (VPIMPLSDGV…KVTRQLNHQL (195 aa)) enclose the Lon N-terminal domain. An ATP-binding site is contributed by 368-375 (GPPGTGKT). Positions 604–785 (ALTPGVVMGL…GDVLELALNG (182 aa)) constitute a Lon proteolytic domain. Catalysis depends on residues Ser691 and Lys734. Positions 784–817 (NGNGATKKKKKTPAKSKKSTKPAAKKTAARKSRK) are disordered. Basic residues predominate over residues 789–817 (TKKKKKTPAKSKKSTKPAAKKTAARKSRK).

Belongs to the peptidase S16 family. Homohexamer. Organized in a ring with a central cavity.

It localises to the cytoplasm. The enzyme catalyses Hydrolysis of proteins in presence of ATP.. Functionally, ATP-dependent serine protease that mediates the selective degradation of mutant and abnormal proteins as well as certain short-lived regulatory proteins. Required for cellular homeostasis and for survival from DNA damage and developmental changes induced by stress. Degrades polypeptides processively to yield small peptide fragments that are 5 to 10 amino acids long. Binds to DNA in a double-stranded, site-specific manner. The polypeptide is Lon protease (Desulfosudis oleivorans (strain DSM 6200 / JCM 39069 / Hxd3) (Desulfococcus oleovorans)).